The following is a 150-amino-acid chain: Peptide deformylase 1 (150 aa).

Residues Cys88 and His130 each coordinate Fe cation. Glu131 is a catalytic residue. His134 lines the Fe cation pocket.

Belongs to the polypeptide deformylase family. Requires Fe(2+) as cofactor.

The catalysed reaction is N-terminal N-formyl-L-methionyl-[peptide] + H2O = N-terminal L-methionyl-[peptide] + formate. Removes the formyl group from the N-terminal Met of newly synthesized proteins. Requires at least a dipeptide for an efficient rate of reaction. N-terminal L-methionine is a prerequisite for activity but the enzyme has broad specificity at other positions. The chain is Peptide deformylase 1 from Clostridium acetobutylicum (strain ATCC 824 / DSM 792 / JCM 1419 / IAM 19013 / LMG 5710 / NBRC 13948 / NRRL B-527 / VKM B-1787 / 2291 / W).